Consider the following 315-residue polypeptide: DNA-directed RNA polymerase subunit alpha (315 aa).

The segment at 1-228 (MLEIEKPIIE…EHFKLFMSLT (228 aa)) is alpha N-terminal domain (alpha-NTD). Residues 245–315 (KEKVLEMTVE…LGLALKLTEE (71 aa)) are alpha C-terminal domain (alpha-CTD).

The protein belongs to the RNA polymerase alpha chain family. As to quaternary structure, homodimer. The RNAP catalytic core consists of 2 alpha, 1 beta, 1 beta' and 1 omega subunit. When a sigma factor is associated with the core the holoenzyme is formed, which can initiate transcription.

It carries out the reaction RNA(n) + a ribonucleoside 5'-triphosphate = RNA(n+1) + diphosphate. Its function is as follows. DNA-dependent RNA polymerase catalyzes the transcription of DNA into RNA using the four ribonucleoside triphosphates as substrates. This Clostridium beijerinckii (strain ATCC 51743 / NCIMB 8052) (Clostridium acetobutylicum) protein is DNA-directed RNA polymerase subunit alpha.